A 904-amino-acid polypeptide reads, in one-letter code: Phosphoenolpyruvate carboxylase (904 aa).

Residues 52–71 are disordered; sequence ISRRESDAPPSTLSEQLTGR. Catalysis depends on residues His-151 and Lys-570.

Belongs to the PEPCase type 1 family. The cofactor is Mg(2+).

It carries out the reaction oxaloacetate + phosphate = phosphoenolpyruvate + hydrogencarbonate. Its function is as follows. Forms oxaloacetate, a four-carbon dicarboxylic acid source for the tricarboxylic acid cycle. The chain is Phosphoenolpyruvate carboxylase from Xanthomonas oryzae pv. oryzae (strain MAFF 311018).